A 154-amino-acid chain; its full sequence is Nuclear cap-binding protein subunit 2 (154 aa).

Residues Tyr-10, Tyr-33, 102 to 106, 113 to 117, and 123 to 124 contribute to the mRNA site; these read RVDWD, RQYGR, and QV. One can recognise an RRM domain in the interval 30–108; sequence CTLYVGNLSF…RLIRVDWDAG (79 aa).

It belongs to the RRM NCBP2 family. In terms of assembly, component of the nuclear cap-binding complex (CBC), a heterodimer composed of Cbp80 and Cbp20 that interacts with m7GpppG-capped RNA. Interacts with Ars2.

The protein localises to the nucleus. Component of the cap-binding complex (CBC), which binds co-transcriptionally to the 5' cap of pre-mRNAs and is involved in various processes such as pre-mRNA splicing and RNA-mediated gene silencing (RNAi). The CBC complex is involved in miRNA-mediated RNA interference via its interaction with Ars2 and is required for primary microRNAs (miRNAs) processing. Also involved in innate immunity via the short interfering RNAs (siRNAs) processing machinery by restricting the viral RNA production. In the CBC complex, Cbp20 recognizes and binds capped RNAs (m7GpppG-capped RNA) but requires Cbp80 to stabilize the movement of its N-terminal loop and lock the CBC into a high affinity cap-binding state with the cap structure. The protein is Nuclear cap-binding protein subunit 2 (Cbp20) of Drosophila erecta (Fruit fly).